The following is a 276-amino-acid chain: Phosphatidylglycerol--prolipoprotein diacylglyceryl transferase (276 aa).

A run of 7 helical transmembrane segments spans residues Phe-17–Trp-37, Phe-59–Tyr-79, Val-94–Ile-114, Val-132–Trp-152, Pro-177–Ala-197, Gly-208–Ala-225, and Leu-235–Ile-255. Arg-142 contacts a 1,2-diacyl-sn-glycero-3-phospho-(1'-sn-glycerol).

This sequence belongs to the Lgt family.

The protein localises to the cell inner membrane. It carries out the reaction L-cysteinyl-[prolipoprotein] + a 1,2-diacyl-sn-glycero-3-phospho-(1'-sn-glycerol) = an S-1,2-diacyl-sn-glyceryl-L-cysteinyl-[prolipoprotein] + sn-glycerol 1-phosphate + H(+). It participates in protein modification; lipoprotein biosynthesis (diacylglyceryl transfer). Its function is as follows. Catalyzes the transfer of the diacylglyceryl group from phosphatidylglycerol to the sulfhydryl group of the N-terminal cysteine of a prolipoprotein, the first step in the formation of mature lipoproteins. This Acidiphilium cryptum (strain JF-5) protein is Phosphatidylglycerol--prolipoprotein diacylglyceryl transferase.